Here is a 421-residue protein sequence, read N- to C-terminus: UPF0415 protein C7orf25 (421 aa).

This sequence belongs to the UPF0415 family.

This Homo sapiens (Human) protein is UPF0415 protein C7orf25 (C7orf25).